Consider the following 359-residue polypeptide: Tyrosine-protein phosphatase non-receptor type 7 (359 aa).

Positions 1–33 are disordered; that stretch reads MVQACEGRSRAQLPTLSLGADMTQPPPTKAPAK. The interval 38–51 is interaction with MAP kinases; sequence LQERRGSSVALMLD. Phosphoserine is present on Ser44. Residue Thr66 is modified to Phosphothreonine. 2 positions are modified to phosphoserine: Ser93 and Ser143. One can recognise a Tyrosine-protein phosphatase domain in the interval 97 to 349; it reads LEEEFLKIPS…QFLHHTLALY (253 aa). Residues Asp257, 290 to 296, and Gln334 contribute to the substrate site; that span reads CSAGIGR. Cys290 (phosphocysteine intermediate) is an active-site residue. Cys290 carries the post-translational modification Cysteine sulfenic acid (-SOH).

Belongs to the protein-tyrosine phosphatase family. Non-receptor class subfamily. In terms of processing, oxidized at active site cysteine. Treatment with pervanadate (vanadate and H(2)O(2)) or with antigen enhanced oxidation of active site cysteine. In terms of tissue distribution, expressed in bone marrow-derived mast cells.

The protein localises to the cytoplasm. It is found in the cytoskeleton. The catalysed reaction is O-phospho-L-tyrosyl-[protein] + H2O = L-tyrosyl-[protein] + phosphate. Inhibited upon FCER1A triggering. Functionally, may play a role in the regulation of T and B-lymphocyte development and signal transduction. The sequence is that of Tyrosine-protein phosphatase non-receptor type 7 (Ptpn7) from Mus musculus (Mouse).